The primary structure comprises 952 residues: MTTVRLHLRRIMCNSSRAQTAQHTEEERKRTIISLQGGKSFGRATTNDVIFLDGTEHVELEPQFISRCHARVHHTNQDGVEEYLVEDISENGTYINDRRLSKDKREILKSGDTIKFGHKNGSQHVADQKYDHPDADFAFCVEMSTAGEPAYQLVEQIRDSRVKVFAGTACAKDIGPREPSTTNKVLQQEADSTNGGPEMENNRASSASSATPEDTQMPSTSQYFCSIPKKTPFRKEFDSPLHNYIYRTSRHSPLYRKKLAEQAQRMAVKNGTFVNDSGVIELLSHLLDINVAYENLVTKNEKLEIIGTFCEKNKGSFKVDELSRRKEELAVMMEEEEPQTIEIRELLVSLSEKAQDVQSNDFTISASSAFTVISTSGVLCPTASLANESEDSYIQHLKSINISSEKSRKIADELKTVRNSEVAPIENKPLSPEMMVVLHRLVKAKEHNNKVAHVYTGNYASTVSRVMEMVPITSQVAVITTAGTPKHTSKGSAETAPMEVDDERHSASSGSTENNYRRRTDSEESEILDVVGTDEPDKDEKGGTETETPTPSPEDHGRQTQNKIDKNVRMSSTPRIDAQSTPSAVVSALPTPMNSPLPRVTSSKSAQDVSTPSTTPNPVSRSPDPVALVKDSVSSESTVSGIVSLEKIGSPAAQSVASVLPSVSNTTSSTSASLTTSSVAEEEETSSKENTDQKRAVDDSSDESARLVKQIKALSATPSSTPAESSKRKQKDTSSRKMKQLDESSADSDSEDDGRSGDKSTKRRDKARRSTRIGKSTPAKKVGKKEKVVEDEDETDDVQEEEKVTPRGGRRKNMKRTASQSAIKERKTKDKDVEPEEAPKKKRGRKKATPTEEEEPPKTEPSKERCGVAKGHCISAKYEKRKNLQWVSCSICNQWFHVWCVRLDNVCYREDETFLCCGSHPSKEAKDALAGRVYARYQAMPNKKPIPQASEA.

The 62-residue stretch at 39 to 100 (KSFGRATTND…NGTYINDRRL (62 aa)) folds into the FHA domain. Disordered regions lie at residues 174-220 (IGPR…MPST), 483-639 (GTPK…ESTV), and 652-866 (AAQS…KERC). Composition is skewed to polar residues over residues 179–195 (PSTT…STNG) and 202–220 (NRAS…MPST). Residues 523 to 537 (EESEILDVVGTDEPD) show a composition bias toward acidic residues. The segment covering 553 to 568 (PEDHGRQTQNKIDKNV) has biased composition (basic and acidic residues). Composition is skewed to polar residues over residues 569–584 (RMSS…TPSA) and 600–620 (VTSS…NPVS). Residues 662–679 (SVSNTTSSTSASLTTSSV) are compositionally biased toward low complexity. Residues 685 to 706 (TSSKENTDQKRAVDDSSDESAR) show a composition bias toward basic and acidic residues. Over residues 715–724 (SATPSSTPAE) the composition is skewed to low complexity. Basic and acidic residues predominate over residues 725-742 (SSKRKQKDTSSRKMKQLD). Over residues 761–772 (TKRRDKARRSTR) the composition is skewed to basic residues. Residues 789-800 (VEDEDETDDVQE) are compositionally biased toward acidic residues. 2 stretches are compositionally biased toward basic and acidic residues: residues 823-832 (IKERKTKDKD) and 856-866 (PPKTEPSKERC).

Its subcellular location is the nucleus. Potential transcription factor that may play a role in the regulation of genes involved in cell cycle G1/S transition. May bind to regulatory elements of genes. This is Germ layers disorganized gldi-3 from Caenorhabditis elegans.